Here is a 143-residue protein sequence, read N- to C-terminus: Deoxyuridine 5'-triphosphate nucleotidohydrolase (143 aa).

Substrate contacts are provided by residues 62-64 (RSG), Asn-75, 79-81 (TID), and Lys-89.

Belongs to the dUTPase family. It depends on Mg(2+) as a cofactor.

It carries out the reaction dUTP + H2O = dUMP + diphosphate + H(+). Its pathway is pyrimidine metabolism; dUMP biosynthesis; dUMP from dCTP (dUTP route): step 2/2. This enzyme is involved in nucleotide metabolism: it produces dUMP, the immediate precursor of thymidine nucleotides and it decreases the intracellular concentration of dUTP so that uracil cannot be incorporated into DNA. The chain is Deoxyuridine 5'-triphosphate nucleotidohydrolase from Clostridium kluyveri (strain ATCC 8527 / DSM 555 / NBRC 12016 / NCIMB 10680 / K1).